Reading from the N-terminus, the 605-residue chain is Elongation factor 4 (605 aa).

A tr-type G domain is found at 9 to 192; the sequence is SRIRNFCIIA…AIIARVPSPA (184 aa). GTP-binding positions include 21–26 and 139–142; these read DHGKST and NKID.

The protein belongs to the TRAFAC class translation factor GTPase superfamily. Classic translation factor GTPase family. LepA subfamily.

Its subcellular location is the cell inner membrane. It carries out the reaction GTP + H2O = GDP + phosphate + H(+). Its function is as follows. Required for accurate and efficient protein synthesis under certain stress conditions. May act as a fidelity factor of the translation reaction, by catalyzing a one-codon backward translocation of tRNAs on improperly translocated ribosomes. Back-translocation proceeds from a post-translocation (POST) complex to a pre-translocation (PRE) complex, thus giving elongation factor G a second chance to translocate the tRNAs correctly. Binds to ribosomes in a GTP-dependent manner. The polypeptide is Elongation factor 4 (Chlorobium phaeovibrioides (strain DSM 265 / 1930) (Prosthecochloris vibrioformis (strain DSM 265))).